A 66-amino-acid polypeptide reads, in one-letter code: Alpha-like toxin BmK-M7 (66 aa).

In terms of domain architecture, LCN-type CS-alpha/beta spans 2–64 (RDGYIALPHN…VPIRVPGRCH (63 aa)). Cystine bridges form between cysteine 12-cysteine 63, cysteine 16-cysteine 36, cysteine 22-cysteine 46, and cysteine 26-cysteine 48.

Belongs to the long (4 C-C) scorpion toxin superfamily. Sodium channel inhibitor family. Alpha subfamily. In terms of tissue distribution, expressed by the venom gland.

The protein resides in the secreted. In terms of biological role, alpha toxins bind voltage-independently at site-3 of sodium channels (Nav) and inhibit the inactivation of the activated channels, thereby blocking neuronal transmission. This toxin is active on both mammals and insects. It can be considered as a cardiotoxin, as it can bind to human cardiac sodium channel and modify its normal properties. In Olivierus martensii (Manchurian scorpion), this protein is Alpha-like toxin BmK-M7.